The primary structure comprises 66 residues: Dermaseptin PD-3-7 (66 aa).

Positions 1–22 (MSFMKKSLLLVLFLGVVSLSNC) are cleaved as a signal peptide. Positions 23-40 (EEEKGENENEDHEEHHEE) are excised as a propeptide.

Expressed by the skin glands.

The protein localises to the secreted. Functionally, possesses a potent antimicrobial activity against Gram-positive and Gram-negative bacteria. Probably acts by disturbing membrane functions with its amphipathic structure. The sequence is that of Dermaseptin PD-3-7 from Agalychnis dacnicolor (Giant Mexican leaf frog).